The following is an 80-amino-acid chain: Translation initiation factor IF-1 (80 aa).

The 75-residue stretch at 6-80 folds into the S1-like domain; it reads EKRKKEESDV…TSRGRIVYRK (75 aa).

Belongs to the IF-1 family. As to quaternary structure, component of the 30S ribosomal translation pre-initiation complex which assembles on the 30S ribosome in the order IF-2 and IF-3, IF-1 and N-formylmethionyl-tRNA(fMet); mRNA recruitment can occur at any time during PIC assembly.

The protein resides in the cytoplasm. Functionally, one of the essential components for the initiation of protein synthesis. Stabilizes the binding of IF-2 and IF-3 on the 30S subunit to which N-formylmethionyl-tRNA(fMet) subsequently binds. Helps modulate mRNA selection, yielding the 30S pre-initiation complex (PIC). Upon addition of the 50S ribosomal subunit IF-1, IF-2 and IF-3 are released leaving the mature 70S translation initiation complex. The sequence is that of Translation initiation factor IF-1 from Deinococcus geothermalis (strain DSM 11300 / CIP 105573 / AG-3a).